The chain runs to 71 residues: MTGVESARDAYIAQGNNCVYQCALNSSCNELCTKNGAKSGYCQWFGKHGNACWCIELPDNVPIRIQGKCQR.

The first 6 residues, 1-6, serve as a signal peptide directing secretion; sequence MTGVES. The 63-residue stretch at 8-70 folds into the LCN-type CS-alpha/beta domain; the sequence is RDAYIAQGNN…VPIRIQGKCQ (63 aa). 4 disulfides stabilise this stretch: Cys-18–Cys-69, Cys-22–Cys-42, Cys-28–Cys-52, and Cys-32–Cys-54. Residue Arg-71 is a propeptide, removed by a carboxypeptidase.

It belongs to the long (4 C-C) scorpion toxin superfamily. Sodium channel inhibitor family. Alpha subfamily. As to expression, expressed by the venom gland.

The protein localises to the secreted. Alpha toxins bind voltage-independently at site-3 of sodium channels (Nav) and inhibit the inactivation of the activated channels, thereby blocking neuronal transmission. The chain is Sodium channel neurotoxin MeuNaTxalpha-12 from Mesobuthus eupeus (Lesser Asian scorpion).